The primary structure comprises 580 residues: Nuclear body protein SP140-like protein (580 aa).

Residues 33–149 form the HSR domain; sequence SLQRLFTEDQ…IYKSFKNAIQ (117 aa). The disordered stretch occupies residues 155–293; it reads QESDRKEREE…RSRASRKHKD (139 aa). The span at 156 to 170 shows a compositional bias: basic and acidic residues; the sequence is ESDRKEREERPDIKL. Lys169 is covalently cross-linked (Glycyl lysine isopeptide (Lys-Gly) (interchain with G-Cter in SUMO2)). Ser180 carries the phosphoserine modification. A compositionally biased stretch (basic residues) spans 207 to 219; it reads KPKRKRRKKKGHG. Residues 224 to 236 show a composition bias toward polar residues; the sequence is GTRTQKNNQQNDN. The span at 280–290 shows a compositional bias: basic residues; it reads QKRVRSRASRK. Residue Lys292 forms a Glycyl lysine isopeptide (Lys-Gly) (interchain with G-Cter in SUMO2) linkage. One can recognise an SAND domain in the interval 293–374; the sequence is DETVDFQAPL…RRLMEEGSLP (82 aa). A PHD-type zinc finger spans residues 403 to 449; the sequence is LDECEVCRDGGELFCCDTCSRVFHEDCHIPPVESEKTPWNCIFCRMK. The Bromo domain occupies 467-570; sequence QMCPEEQLKC…AEFEKDFKEV (104 aa).

This Homo sapiens (Human) protein is Nuclear body protein SP140-like protein (SP140L).